Here is a 380-residue protein sequence, read N- to C-terminus: Lipoyl synthase, mitochondrial (380 aa).

[4Fe-4S] cluster contacts are provided by C104, C109, C115, C135, C139, C142, and S350. The region spanning 120–339 is the Radical SAM core domain; that stretch reads EHGTQTATIM…ETRGNELGFL (220 aa).

The protein belongs to the radical SAM superfamily. Lipoyl synthase family. The cofactor is [4Fe-4S] cluster.

The protein localises to the mitochondrion. It carries out the reaction [[Fe-S] cluster scaffold protein carrying a second [4Fe-4S](2+) cluster] + N(6)-octanoyl-L-lysyl-[protein] + 2 oxidized [2Fe-2S]-[ferredoxin] + 2 S-adenosyl-L-methionine + 4 H(+) = [[Fe-S] cluster scaffold protein] + N(6)-[(R)-dihydrolipoyl]-L-lysyl-[protein] + 4 Fe(3+) + 2 hydrogen sulfide + 2 5'-deoxyadenosine + 2 L-methionine + 2 reduced [2Fe-2S]-[ferredoxin]. It participates in protein modification; protein lipoylation via endogenous pathway; protein N(6)-(lipoyl)lysine from octanoyl-[acyl-carrier-protein]: step 2/2. Catalyzes the radical-mediated insertion of two sulfur atoms into the C-6 and C-8 positions of the octanoyl moiety bound to the lipoyl domains of lipoate-dependent enzymes, thereby converting the octanoylated domains into lipoylated derivatives. In Culex quinquefasciatus (Southern house mosquito), this protein is Lipoyl synthase, mitochondrial.